A 210-amino-acid polypeptide reads, in one-letter code: Thiamine-phosphate synthase (210 aa).

Residues 36-40 (QLREK) and Asn-68 contribute to the 4-amino-2-methyl-5-(diphosphooxymethyl)pyrimidine site. The Mg(2+) site is built by Asp-69 and Asp-88. Ser-107 lines the 4-amino-2-methyl-5-(diphosphooxymethyl)pyrimidine pocket. 133–135 (TGS) provides a ligand contact to 2-[(2R,5Z)-2-carboxy-4-methylthiazol-5(2H)-ylidene]ethyl phosphate. Lys-136 provides a ligand contact to 4-amino-2-methyl-5-(diphosphooxymethyl)pyrimidine. 2-[(2R,5Z)-2-carboxy-4-methylthiazol-5(2H)-ylidene]ethyl phosphate-binding positions include Gly-164 and 184–185 (IS).

It belongs to the thiamine-phosphate synthase family. Requires Mg(2+) as cofactor.

The catalysed reaction is 2-[(2R,5Z)-2-carboxy-4-methylthiazol-5(2H)-ylidene]ethyl phosphate + 4-amino-2-methyl-5-(diphosphooxymethyl)pyrimidine + 2 H(+) = thiamine phosphate + CO2 + diphosphate. It carries out the reaction 2-(2-carboxy-4-methylthiazol-5-yl)ethyl phosphate + 4-amino-2-methyl-5-(diphosphooxymethyl)pyrimidine + 2 H(+) = thiamine phosphate + CO2 + diphosphate. The enzyme catalyses 4-methyl-5-(2-phosphooxyethyl)-thiazole + 4-amino-2-methyl-5-(diphosphooxymethyl)pyrimidine + H(+) = thiamine phosphate + diphosphate. The protein operates within cofactor biosynthesis; thiamine diphosphate biosynthesis; thiamine phosphate from 4-amino-2-methyl-5-diphosphomethylpyrimidine and 4-methyl-5-(2-phosphoethyl)-thiazole: step 1/1. Its function is as follows. Condenses 4-methyl-5-(beta-hydroxyethyl)thiazole monophosphate (THZ-P) and 2-methyl-4-amino-5-hydroxymethyl pyrimidine pyrophosphate (HMP-PP) to form thiamine monophosphate (TMP). The protein is Thiamine-phosphate synthase of Moorella thermoacetica (strain ATCC 39073 / JCM 9320).